The following is a 134-amino-acid chain: Small ribosomal subunit protein uS8c (134 aa).

The protein belongs to the universal ribosomal protein uS8 family. As to quaternary structure, part of the 30S ribosomal subunit.

The protein localises to the plastid. It localises to the chloroplast. Functionally, one of the primary rRNA binding proteins, it binds directly to 16S rRNA central domain where it helps coordinate assembly of the platform of the 30S subunit. This is Small ribosomal subunit protein uS8c (rps8) from Ipomoea purpurea (Common morning glory).